A 145-amino-acid polypeptide reads, in one-letter code: Cytochrome c2 (145 aa).

The signal sequence occupies residues 1 to 21 (MKFQVKALAAIAAFAALPALA). Glutamine 22 carries the pyrrolidone carboxylic acid modification. Positions 36, 39, 40, and 121 each coordinate heme c.

It belongs to the cytochrome c family. Post-translationally, binds 1 heme c group covalently per subunit.

The protein localises to the periplasm. Its function is as follows. Cytochrome c2 is found mainly in purple, non-sulfur, photosynthetic bacteria where it functions as the electron donor to the oxidized bacteriochlorophyll in the photophosphorylation pathway. However, it may also have a role in the respiratory chain and is found in some non-photosynthetic bacteria. The sequence is that of Cytochrome c2 (cycA) from Cereibacter sphaeroides (strain ATCC 17023 / DSM 158 / JCM 6121 / CCUG 31486 / LMG 2827 / NBRC 12203 / NCIMB 8253 / ATH 2.4.1.) (Rhodobacter sphaeroides).